Here is a 166-residue protein sequence, read N- to C-terminus: V-type proton ATPase subunit c4 (166 aa).

Over 1–13 the chain is Lumenal; it reads MASSGFSGDETAP. Residues 14–34 traverse the membrane as a helical segment; that stretch reads FFGFLGAAAALVFSCMGAAYG. The Cytoplasmic portion of the chain corresponds to 35–56; the sequence is TAKSGVGVASMGVMRPELVMKS. Residues 57-77 traverse the membrane as a helical segment; it reads IVPVVMAGVLGIYGLIIAVII. At 78–96 the chain is on the lumenal side; sequence STGINPKAKSYYLFDGYAH. Residues 97-118 traverse the membrane as a helical segment; the sequence is LSSGLACGLAGLSAGMAIGIVG. The Cytoplasmic portion of the chain corresponds to 119–130; that stretch reads DAGVRANAQQPK. The helical transmembrane segment at 131–156 threads the bilayer; the sequence is LFVGMILILIFAEALALYGLIVGIIL. Residues 157-166 are Lumenal-facing; it reads SSRAGQSRAE.

This sequence belongs to the V-ATPase proteolipid subunit family. V-ATPase is a heteromultimeric enzyme composed of a peripheral catalytic V1 complex (components A to H) attached to an integral membrane V0 proton pore complex (components: a, c, c'', d and e). The proteolipid components c and c'' are present as a hexameric ring that forms the proton-conducting pore. Interacts with APD2.

It is found in the vacuole membrane. Functionally, proton-conducting pore forming subunit of the membrane integral V0 complex of vacuolar ATPase. V-ATPase is responsible for acidifying a variety of intracellular compartments in eukaryotic cells. In Arabidopsis thaliana (Mouse-ear cress), this protein is V-type proton ATPase subunit c4 (VHA-c4).